The following is a 367-amino-acid chain: Phosphoribosylaminoimidazole-succinocarboxamide synthase (367 aa).

The protein belongs to the SAICAR synthetase family.

It carries out the reaction 5-amino-1-(5-phospho-D-ribosyl)imidazole-4-carboxylate + L-aspartate + ATP = (2S)-2-[5-amino-1-(5-phospho-beta-D-ribosyl)imidazole-4-carboxamido]succinate + ADP + phosphate + 2 H(+). It participates in purine metabolism; IMP biosynthesis via de novo pathway; 5-amino-1-(5-phospho-D-ribosyl)imidazole-4-carboxamide from 5-amino-1-(5-phospho-D-ribosyl)imidazole-4-carboxylate: step 1/2. The polypeptide is Phosphoribosylaminoimidazole-succinocarboxamide synthase (Shewanella halifaxensis (strain HAW-EB4)).